Reading from the N-terminus, the 356-residue chain is MNEAETIRYHAAHNGRPAELDLLDQTKLPGTLTRLVCTTIDQTHDAIQRLVVRGAPAIGIAAAYGVTLTPVDAESNSSLPEAQARYRQTIDYLATSRPTAVNLFWALDRMRAIVDDFSGPVAELRERLVTEAIRIHDDDRQMCRSIGCHGATLLADCKSVMTHCNAGSLATSMWGTALAPMYHLHESGHSLEVFADETRPLLQGARLTAWELHQAGIPVTVCTDSMSGSLMRQGRVDAVIVGADRIAANGDVANKIGTYPLAVLAKYHNIPFYVAAPTNTFDSELESGDLIPIEQRSADEVSYPCGTDSPRQTPEGVAVVNPAFDVTPAELVTALITEKGVISEPDTAKVRAHLGL.

Substrate contacts are provided by residues 53–55 (RGA), arginine 97, and glutamine 203. The active-site Proton donor is aspartate 244. 254–255 (NK) is a substrate binding site.

Belongs to the eIF-2B alpha/beta/delta subunits family. MtnA subfamily.

It carries out the reaction 5-(methylsulfanyl)-alpha-D-ribose 1-phosphate = 5-(methylsulfanyl)-D-ribulose 1-phosphate. Its pathway is amino-acid biosynthesis; L-methionine biosynthesis via salvage pathway; L-methionine from S-methyl-5-thio-alpha-D-ribose 1-phosphate: step 1/6. Its function is as follows. Catalyzes the interconversion of methylthioribose-1-phosphate (MTR-1-P) into methylthioribulose-1-phosphate (MTRu-1-P). This Rhodopirellula baltica (strain DSM 10527 / NCIMB 13988 / SH1) protein is Methylthioribose-1-phosphate isomerase.